Here is a 154-residue protein sequence, read N- to C-terminus: Aspartate carbamoyltransferase regulatory chain (154 aa).

Cysteine 109, cysteine 114, cysteine 138, and cysteine 141 together coordinate Zn(2+).

The protein belongs to the PyrI family. In terms of assembly, contains catalytic and regulatory chains. The cofactor is Zn(2+).

Its function is as follows. Involved in allosteric regulation of aspartate carbamoyltransferase. In Photorhabdus laumondii subsp. laumondii (strain DSM 15139 / CIP 105565 / TT01) (Photorhabdus luminescens subsp. laumondii), this protein is Aspartate carbamoyltransferase regulatory chain.